We begin with the raw amino-acid sequence, 264 residues long: uncharacterized protein (264 aa).

15-22 (KGGTGKTT) lines the ATP pocket.

The protein belongs to the ParA family. MinD subfamily.

This is an uncharacterized protein from Methanocaldococcus jannaschii (strain ATCC 43067 / DSM 2661 / JAL-1 / JCM 10045 / NBRC 100440) (Methanococcus jannaschii).